Reading from the N-terminus, the 1087-residue chain is Formin-H (1087 aa).

Over residues 1–23 (MSFDLESNSSGGSTIGRNSSIRL) the composition is skewed to polar residues. The interval 1–25 (MSFDLESNSSGGSTIGRNSSIRLSS) is disordered. A GBD/FH3 domain is found at 34–394 (VSLNEIIDLD…QLEDELKIHP (361 aa)). 2 stretches are compositionally biased toward low complexity: residues 416-436 (FGFG…SMAK) and 549-558 (SPGSTLSPSP). 3 disordered regions span residues 416–445 (FGFG…DNEE), 549–625 (SPGS…PAKP), and 1048–1087 (VDSL…QLKK). A coiled-coil region spans residues 433 to 461 (SMAKTELKKDNEEKQKTIEHLLKQLNKFS). A compositionally biased stretch (polar residues) spans 569-588 (FGITSSSIHTSTDKLTNSTE). Residues 589–615 (PILGSPPPPPPPPMSGGGGPPPPPPPP) enclose the FH1 domain. The span at 592-616 (GSPPPPPPPPMSGGGGPPPPPPPPG) shows a compositional bias: pro residues. Positions 623–1016 (AKPIIKPSVK…ENSKMEDPEK (394 aa)) constitute an FH2 domain. A DAD domain is found at 1013 to 1051 (DPEKGGLQDLSSQIRSGQLFKDRRVGDSVIAQMQNVDSL).

It belongs to the formin homology family. Diaphanous subfamily. In terms of assembly, interacts with vasP, proB/profilin-2 and rac1A. Interacts (via GBD/FH3 domain) with activated Rho-GTPases.

The protein localises to the cytoplasm. The protein resides in the cell cortex. It is found in the cytoskeleton. In terms of biological role, formins play an important role in the nucleation of actin and the formation of linear actin filaments. Important for cell migration and formation, elongation and maintenance of filopodia. Specifically controls filopodial dynamics by regulating actin turnover at the barbed ends of actin filaments. This is Formin-H (forH) from Dictyostelium discoideum (Social amoeba).